Consider the following 446-residue polypeptide: Coagulation factor VII (446 aa).

The first 24 residues, 1–24 (MVPQTHGLLLLYFLLQLQGPLGAV), serve as a signal peptide directing secretion. The propeptide occupies 25–41 (VFITQEEAHGVLHRQRR). The 45-residue stretch at 42–86 (ANSLLEELWSSSLERECNEERCSFEEAREIFKSPERTKQFWTIYS) folds into the Gla domain. A 4-carboxyglutamate mark is found at glutamate 47, glutamate 48, glutamate 55, glutamate 57, glutamate 60, glutamate 61, glutamate 66, glutamate 67, glutamate 70, and glutamate 76. Cysteines 58 and 63 form a disulfide. One can recognise an EGF-like 1; calcium-binding domain in the interval 87–123 (DGDQCASNPCQNGGTCQDHLKSYVCFCPLDFEGRNCE). 10 cysteine pairs are disulfide-bonded: cysteine 91–cysteine 102, cysteine 96–cysteine 111, cysteine 113–cysteine 122, cysteine 132–cysteine 143, cysteine 139–cysteine 153, cysteine 155–cysteine 168, cysteine 176–cysteine 303, cysteine 200–cysteine 205, cysteine 219–cysteine 235, and cysteine 351–cysteine 370. O-linked (Glc...) serine; alternate glycosylation is present at serine 93. A glycan (O-linked (Xyl...) serine; alternate) is linked at serine 93. Threonine 101 carries O-linked (Fuc) threonine glycosylation. Aspartate 104 carries the (3R)-3-hydroxyaspartate modification. The EGF-like 2 domain maps to 128–169 (EQLICANENGDCDQYCRDHVGTKRTCSCHEDYVLQPDEVSCK). Residue asparagine 186 is glycosylated (N-linked (GlcNAc...) asparagine). One can recognise a Peptidase S1 domain in the interval 194–433 (IVGGYVCPKG…YIDWLVKYMD (240 aa)). Catalysis depends on histidine 234, which acts as the Charge relay system. An N-linked (GlcNAc...) asparagine glycan is attached at asparagine 244. The active-site Charge relay system is the aspartate 283. Aspartate 379 is a binding site for substrate. Cysteines 381 and 409 form a disulfide. Residue serine 385 is the Charge relay system of the active site.

The protein belongs to the peptidase S1 family. Heterodimer of a light chain and a heavy chain linked by a disulfide bond. In terms of processing, the vitamin K-dependent, enzymatic carboxylation of some glutamate residues allows the modified protein to bind calcium. Post-translationally, the iron and 2-oxoglutarate dependent 3-hydroxylation of aspartate and asparagine is (R) stereospecific within EGF domains. Can be either O-glucosylated or O-xylosylated at Ser-93 by POGLUT1. In terms of tissue distribution, plasma.

Its subcellular location is the secreted. It carries out the reaction Selective cleavage of Arg-|-Ile bond in factor X to form factor Xa.. Initiates the extrinsic pathway of blood coagulation. Serine protease that circulates in the blood in a zymogen form. Factor VII is converted to factor VIIa by factor Xa, factor XIIa, factor IXa, or thrombin by minor proteolysis. In the presence of tissue factor and calcium ions, factor VIIa then converts factor X to factor Xa by limited proteolysis. Factor VIIa also converts factor IX to factor IXa in the presence of tissue factor and calcium. This Rattus norvegicus (Rat) protein is Coagulation factor VII (F7).